The sequence spans 424 residues: Serine hydroxymethyltransferase (424 aa).

Residues L118 and 122-124 contribute to the (6S)-5,6,7,8-tetrahydrofolate site; that span reads GHL. K227 is modified (N6-(pyridoxal phosphate)lysine). (6S)-5,6,7,8-tetrahydrofolate is bound at residue 351-353; the sequence is SPF.

Belongs to the SHMT family. As to quaternary structure, homodimer. It depends on pyridoxal 5'-phosphate as a cofactor.

It localises to the cytoplasm. It catalyses the reaction (6R)-5,10-methylene-5,6,7,8-tetrahydrofolate + glycine + H2O = (6S)-5,6,7,8-tetrahydrofolate + L-serine. It functions in the pathway one-carbon metabolism; tetrahydrofolate interconversion. Its pathway is amino-acid biosynthesis; glycine biosynthesis; glycine from L-serine: step 1/1. Its function is as follows. Catalyzes the reversible interconversion of serine and glycine with tetrahydrofolate (THF) serving as the one-carbon carrier. This reaction serves as the major source of one-carbon groups required for the biosynthesis of purines, thymidylate, methionine, and other important biomolecules. Also exhibits THF-independent aldolase activity toward beta-hydroxyamino acids, producing glycine and aldehydes, via a retro-aldol mechanism. The protein is Serine hydroxymethyltransferase of Pseudothermotoga lettingae (strain ATCC BAA-301 / DSM 14385 / NBRC 107922 / TMO) (Thermotoga lettingae).